Reading from the N-terminus, the 282-residue chain is Nucleotide-binding protein in ptsN-ptsO intergenic region (282 aa).

8 to 15 (GRSGSGKS) contacts ATP. 56 to 59 (DVRN) lines the GTP pocket.

This sequence belongs to the RapZ-like family.

In terms of biological role, displays ATPase and GTPase activities. The chain is Nucleotide-binding protein in ptsN-ptsO intergenic region from Shewanella violacea.